The chain runs to 579 residues: SLAIN motif-containing protein 1 (579 aa).

6 disordered regions span residues 1–21 (MMAE…GPGP), 60–95 (LLLQ…GPGA), 135–162 (GGGG…PPTL), 233–258 (YTSR…LEDD), 289–313 (STSA…TCSD), and 347–454 (IPHS…PGQI). Residues 9–21 (ASPVAASGAGPGP) are compositionally biased toward low complexity. Positions 21–56 (PVVNAELEVKKLQELVRKLEKQNEQLRSRAASAAAA) form a coiled coil. Residues 63–73 (QPPPPSAPPPA) show a composition bias toward pro residues. Positions 141-154 (EPGTAGTPPGEAAT) are enriched in low complexity. The segment covering 233–243 (YTSRGSPLSPQ) has biased composition (polar residues). Phosphoserine is present on Ser-241. 2 stretches are compositionally biased toward low complexity: residues 244–253 (SSIDSELSTS) and 289–305 (STSA…SLSS). Polar residues predominate over residues 362–373 (SPSTQYFPSNNF). A compositionally biased stretch (low complexity) spans 374–390 (QQPQYYPPQAQTADQQP). The span at 412–432 (AAASSNLSSPVTVRSSQSFDS) shows a compositional bias: polar residues. Arg-469 carries the post-translational modification Asymmetric dimethylarginine. A disordered region spans residues 479-516 (SPTVQGSSSSGSSGSSGGSGSGMPLSNGTQLYSTTGIP). Polar residues predominate over residues 502–516 (PLSNGTQLYSTTGIP). At Arg-554 the chain carries Asymmetric dimethylarginine.

This sequence belongs to the SLAIN motif-containing family. Interacts with MAPRE1, MAPRE2, MAPRE3 and CKAP5. Interacts with ZDHHC17 (via ANK repeats). In terms of tissue distribution, expressed in embryonic stem cells. Expressed in adult bone marrow, brain, kidney, lung, testis and thymus. Expressed in colon. Isoform 1 is highly expressed in brain. Isoform 2 is more widely expressed in bone marrow, brain, colon, kidney, lung and thymus.

Its subcellular location is the cytoplasm. The protein resides in the cytoskeleton. Functionally, microtubule plus-end tracking protein that might be involved in the regulation of cytoplasmic microtubule dynamics, microtubule organization and microtubule elongation. The sequence is that of SLAIN motif-containing protein 1 (Slain1) from Mus musculus (Mouse).